The sequence spans 373 residues: Cytoplasmic tRNA 2-thiolation protein 1 (373 aa).

This sequence belongs to the TtcA family. CTU1/NCS6/ATPBD3 subfamily.

The protein localises to the cytoplasm. It participates in tRNA modification; 5-methoxycarbonylmethyl-2-thiouridine-tRNA biosynthesis. Plays a central role in 2-thiolation of mcm(5)S(2)U at tRNA wobble positions of tRNA(Lys), tRNA(Glu) and tRNA(Gln). Directly binds tRNAs and probably acts by catalyzing adenylation of tRNAs, an intermediate required for 2-thiolation. It is unclear whether it acts as a sulfurtransferase that transfers sulfur from thiocarboxylated URM1 onto the uridine of tRNAs at wobble position. Prior mcm(5) tRNA modification by the elongator complex is required for 2-thiolation. May also be involved in protein urmylation. In Malassezia globosa (strain ATCC MYA-4612 / CBS 7966) (Dandruff-associated fungus), this protein is Cytoplasmic tRNA 2-thiolation protein 1.